The following is a 309-amino-acid chain: Cytochrome c biogenesis protein CcsA (309 aa).

Helical transmembrane passes span 18–38 (LGLLVFYFLLINLPISLGAVF), 43–63 (SFAVRLITILVNLLITLQLLF), 73–93 (ISNLYESLYFLAWGITLGQLL), 102–122 (IIPSIAIPIELLIVSFACFVL), 148–168 (VMLSYAALIIGSLLSMSVLFI), 216–236 (SILIGFVLLTLGLISGAVWAN), 250–267 (TWAFISWLFYAAYLHMRI), and 279–299 (LASTGFLVVLVCYLGVNFLGI).

Belongs to the CcmF/CycK/Ccl1/NrfE/CcsA family. In terms of assembly, may interact with ccs1.

The protein resides in the cellular thylakoid membrane. Its function is as follows. Required during biogenesis of c-type cytochromes (cytochrome c6 and cytochrome f) at the step of heme attachment. This chain is Cytochrome c biogenesis protein CcsA, found in Prochlorococcus marinus (strain MIT 9301).